Consider the following 713-residue polypeptide: MLCVGRLGGLGARAAALPPRRAGRGSLEAGIRARRVSTSWSPVGAAFNVKPQGSRLDLFGERRGLFGVPELSAPEGFHIAQEKALRKTELLVDRACSTPPGPQTVLIFDELSDSLCRVADLADFVKIAHPEPAFREAAEEACRSIGTMVEKLNTNVDLYQSLQKLLADKKLVDSLDPETRRVAELFMFDFEISGIHLDKEKRKRAVDLNVKILDLSSTFLMGTNFPNKIEKHLLPEHIRRNFTSAGDHIIIDGLHAESPDDLVREAAYKIFLYPNAGQLKCLEELLSSRDLLAKLVGYSTFSHRALQGTIAKNPETVMQFLEKLSDKLSERTLKDFEMIRGMKMKLNPQNSEVMPWDPPYYSGVIRAERYNIEPSLYCPFFSLGACMEGLNILLNRLLGISLYAEQPAKGEVWSEDVRKLAVVHESEGLLGYIYCDFFQRADKPHQDCHFTIRGGRLKEDGDYQLPVVVLMLNLPRSSRSSPTLLTPSMMENLFHEMGHAMHSMLGRTRYQHVTGTRCPTDFAEVPSILMEYFANDYRVVNQFARHYQTGQPLPKNMVSRLCESKKVCAAADMQLQVFYATLDQIYHGKHPLRNSTTDILKETQEKFYGLPYVPNTAWQLRFSHLVGYGARYYSYLMSRAVASMVWKECFLQDPFNRAAGERYRREMLAHGGGREPMLMVEGMLQKCPSVDDFVSALVSDLDLDFETFLMDSE.

The N-terminal 35 residues, 1–35 (MLCVGRLGGLGARAAALPPRRAGRGSLEAGIRARR), are a transit peptide targeting the mitochondrion. Lys126 carries the N6-acetyllysine modification. Residue His495 participates in Zn(2+) binding. Glu496 is an active-site residue. His499 and His502 together coordinate Zn(2+).

The protein belongs to the peptidase M3 family. In terms of assembly, monomer. Zn(2+) serves as cofactor.

It localises to the mitochondrion matrix. It catalyses the reaction Release of an N-terminal octapeptide as second stage of processing of some proteins imported into the mitochondrion.. Activity is divalent cation-dependent. It is stimulated by manganese, magnesium or calcium ions and reversibly inhibited by zinc, cobalt and iron. Its function is as follows. Cleaves proteins, imported into the mitochondrion, to their mature size. This is Mitochondrial intermediate peptidase (MIPEP) from Homo sapiens (Human).